The chain runs to 386 residues: Succinate--CoA ligase [ADP-forming] subunit beta (386 aa).

The region spanning 9-244 is the ATP-grasp domain; that stretch reads KELLKQFGVP…LDEEDPAEIE (236 aa). ATP contacts are provided by residues Lys-46, 53 to 55, Glu-99, Ala-102, and Glu-107; that span reads GRG. Mg(2+) is bound by residues Asn-199 and Asp-213. Residues Asn-264 and 321–323 contribute to the substrate site; that span reads GIM.

Belongs to the succinate/malate CoA ligase beta subunit family. Heterotetramer of two alpha and two beta subunits. It depends on Mg(2+) as a cofactor.

The catalysed reaction is succinate + ATP + CoA = succinyl-CoA + ADP + phosphate. It carries out the reaction GTP + succinate + CoA = succinyl-CoA + GDP + phosphate. It participates in carbohydrate metabolism; tricarboxylic acid cycle; succinate from succinyl-CoA (ligase route): step 1/1. In terms of biological role, succinyl-CoA synthetase functions in the citric acid cycle (TCA), coupling the hydrolysis of succinyl-CoA to the synthesis of either ATP or GTP and thus represents the only step of substrate-level phosphorylation in the TCA. The beta subunit provides nucleotide specificity of the enzyme and binds the substrate succinate, while the binding sites for coenzyme A and phosphate are found in the alpha subunit. In Bordetella avium (strain 197N), this protein is Succinate--CoA ligase [ADP-forming] subunit beta.